Reading from the N-terminus, the 196-residue chain is Adenylate kinase (196 aa).

Gly9–Thr17 contributes to the ATP binding site.

Belongs to the archaeal adenylate kinase family.

The protein resides in the cytoplasm. It carries out the reaction AMP + ATP = 2 ADP. The chain is Adenylate kinase from Thermococcus sibiricus (strain DSM 12597 / MM 739).